The following is a 182-amino-acid chain: Adenine phosphoribosyltransferase (182 aa).

Belongs to the purine/pyrimidine phosphoribosyltransferase family. As to quaternary structure, homodimer.

The protein localises to the cytoplasm. The catalysed reaction is AMP + diphosphate = 5-phospho-alpha-D-ribose 1-diphosphate + adenine. It participates in purine metabolism; AMP biosynthesis via salvage pathway; AMP from adenine: step 1/1. Its function is as follows. Catalyzes a salvage reaction resulting in the formation of AMP, that is energically less costly than de novo synthesis. This Pseudomonas fluorescens (strain Pf0-1) protein is Adenine phosphoribosyltransferase.